The sequence spans 146 residues: NADPH-dependent 7-cyano-7-deazaguanine reductase (146 aa).

The active-site Thioimide intermediate is Cys48. Asp55 acts as the Proton donor in catalysis. Residues 70–72 (VES) and 89–90 (HE) contribute to the substrate site.

It belongs to the GTP cyclohydrolase I family. QueF type 1 subfamily.

The protein resides in the cytoplasm. The catalysed reaction is 7-aminomethyl-7-carbaguanine + 2 NADP(+) = 7-cyano-7-deazaguanine + 2 NADPH + 3 H(+). Its pathway is tRNA modification; tRNA-queuosine biosynthesis. Functionally, catalyzes the NADPH-dependent reduction of 7-cyano-7-deazaguanine (preQ0) to 7-aminomethyl-7-deazaguanine (preQ1). This is NADPH-dependent 7-cyano-7-deazaguanine reductase from Helicobacter pylori (strain Shi470).